The chain runs to 352 residues: Molybdenum import ATP-binding protein ModC (352 aa).

Positions 1 to 229 (MLELNFSQTL…SVMNPWLPKE (229 aa)) constitute an ABC transporter domain. 31–38 (GVSGAGKT) provides a ligand contact to ATP. Positions 289–352 (QTSIRNVLRA…AQIKSVSITA (64 aa)) constitute a Mop domain.

Belongs to the ABC transporter superfamily. Molybdate importer (TC 3.A.1.8) family. The complex is composed of two ATP-binding proteins (ModC), two transmembrane proteins (ModB) and a solute-binding protein (ModA).

The protein localises to the cell inner membrane. It catalyses the reaction molybdate(out) + ATP + H2O = molybdate(in) + ADP + phosphate + H(+). Part of the ABC transporter complex ModABC involved in molybdenum import. Responsible for energy coupling to the transport system. This chain is Molybdenum import ATP-binding protein ModC, found in Escherichia coli O6:K15:H31 (strain 536 / UPEC).